Reading from the N-terminus, the 277-residue chain is Probable endonuclease 4 (277 aa).

His-67, His-107, Glu-142, Asp-176, His-179, His-211, Asp-224, His-226, and Glu-256 together coordinate Zn(2+).

The protein belongs to the AP endonuclease 2 family. It depends on Zn(2+) as a cofactor.

The catalysed reaction is Endonucleolytic cleavage to 5'-phosphooligonucleotide end-products.. Its function is as follows. Endonuclease IV plays a role in DNA repair. It cleaves phosphodiester bonds at apurinic or apyrimidinic (AP) sites, generating a 3'-hydroxyl group and a 5'-terminal sugar phosphate. The chain is Probable endonuclease 4 from Akkermansia muciniphila (strain ATCC BAA-835 / DSM 22959 / JCM 33894 / BCRC 81048 / CCUG 64013 / CIP 107961 / Muc).